Reading from the N-terminus, the 471-residue chain is Trigger factor (471 aa).

In terms of domain architecture, PPIase FKBP-type spans 171-262 (GDLAIVDYAA…LKEIKFRELP (92 aa)). The tract at residues 440-471 (PEGSLSQTEEDTPDDDAEEEAIVDVEATSDEE) is disordered. Residues 447–471 (TEEDTPDDDAEEEAIVDVEATSDEE) are compositionally biased toward acidic residues.

It belongs to the FKBP-type PPIase family. Tig subfamily.

It localises to the cytoplasm. It catalyses the reaction [protein]-peptidylproline (omega=180) = [protein]-peptidylproline (omega=0). Functionally, involved in protein export. Acts as a chaperone by maintaining the newly synthesized protein in an open conformation. Functions as a peptidyl-prolyl cis-trans isomerase. This Synechocystis sp. (strain ATCC 27184 / PCC 6803 / Kazusa) protein is Trigger factor (tig).